The following is a 197-amino-acid chain: Adenylate kinase (197 aa).

An ATP-binding site is contributed by 16-21 (GAGKGT). Residues 36–65 (STGDILRDHVARGTALGQQAGPLMEAGQLV) form an NMP region. AMP contacts are provided by residues Thr37, Arg42, 63–65 (QLV), 90–93 (GFPR), and Gln97. The interval 131–147 (DRGRQAVAEGRAPRADD) is LID. Arg132 lines the ATP pocket. A disordered region spans residues 137 to 158 (VAEGRAPRADDNEETARKRQQV). Positions 141–153 (RAPRADDNEETAR) are enriched in basic and acidic residues. Positions 144 and 155 each coordinate AMP. Position 183 (Gly183) interacts with ATP.

The protein belongs to the adenylate kinase family. In terms of assembly, monomer.

The protein localises to the cytoplasm. It carries out the reaction AMP + ATP = 2 ADP. It participates in purine metabolism; AMP biosynthesis via salvage pathway; AMP from ADP: step 1/1. Functionally, catalyzes the reversible transfer of the terminal phosphate group between ATP and AMP. Plays an important role in cellular energy homeostasis and in adenine nucleotide metabolism. The chain is Adenylate kinase from Deinococcus radiodurans (strain ATCC 13939 / DSM 20539 / JCM 16871 / CCUG 27074 / LMG 4051 / NBRC 15346 / NCIMB 9279 / VKM B-1422 / R1).